Reading from the N-terminus, the 551-residue chain is HTH-type transcriptional regulator SgrR (551 aa).

The HTH marR-type domain maps to methionine 1–arginine 116. Residues leucine 26 to aspartate 49 constitute a DNA-binding region (H-T-H motif). The solute-binding stretch occupies residues glutamate 163 to tryptophan 492.

Functionally, activates the small RNA gene sgrS under glucose-phosphate stress conditions as well as yfdZ. Represses its own transcription under both stress and non-stress conditions. Might act as a sensor of the intracellular accumulation of phosphoglucose by binding these molecules in its C-terminal solute-binding domain. In Shigella boydii serotype 4 (strain Sb227), this protein is HTH-type transcriptional regulator SgrR.